The chain runs to 250 residues: Flavin-dependent thymidylate synthase (250 aa).

Residues 7 to 233 (LRVQLIAKTE…PQVFSDFEIV (227 aa)) enclose the ThyX domain. FAD is bound by residues serine 71, 95-97 (RHR), and glutamine 103. DUMP is bound by residues 92–95 (ELIR), 103–107 (QLSQR), and arginine 172. The short motif at 95–105 (RHRHFSYSQLS) is the ThyX motif element. Residues 188–190 (NYR) and histidine 194 contribute to the FAD site. Position 199 (arginine 199) interacts with dUMP. Arginine 199 (involved in ionization of N3 of dUMP, leading to its activation) is an active-site residue.

It belongs to the thymidylate synthase ThyX family. As to quaternary structure, homotetramer. FAD is required as a cofactor.

It catalyses the reaction dUMP + (6R)-5,10-methylene-5,6,7,8-tetrahydrofolate + NADPH + H(+) = dTMP + (6S)-5,6,7,8-tetrahydrofolate + NADP(+). It participates in pyrimidine metabolism; dTTP biosynthesis. Functionally, catalyzes the reductive methylation of 2'-deoxyuridine-5'-monophosphate (dUMP) to 2'-deoxythymidine-5'-monophosphate (dTMP) while utilizing 5,10-methylenetetrahydrofolate (mTHF) as the methyl donor, and NADPH and FADH(2) as the reductant. This Mycolicibacterium vanbaalenii (strain DSM 7251 / JCM 13017 / BCRC 16820 / KCTC 9966 / NRRL B-24157 / PYR-1) (Mycobacterium vanbaalenii) protein is Flavin-dependent thymidylate synthase.